A 121-amino-acid chain; its full sequence is Putative ferredoxin (121 aa).

This sequence to E.coli YkgJ.

In Acinetobacter calcoaceticus, this protein is Putative ferredoxin.